A 305-amino-acid polypeptide reads, in one-letter code: Protoheme IX farnesyltransferase (305 aa).

The next 9 helical transmembrane spans lie at 31–51 (VMSL…YSVH), 52–72 (PFIA…AGAI), 102–119 (ALSF…FMAL), 123–145 (LLAS…IWLK), 151–171 (NIVI…AAVS), 179–199 (IILF…LALF), 225–245 (ILIY…IGMN), 247–267 (FIYL…SGSL), and 284–304 (SIFY…ISLI).

The protein belongs to the UbiA prenyltransferase family. Protoheme IX farnesyltransferase subfamily.

The protein resides in the cell inner membrane. The catalysed reaction is heme b + (2E,6E)-farnesyl diphosphate + H2O = Fe(II)-heme o + diphosphate. Its pathway is porphyrin-containing compound metabolism; heme O biosynthesis; heme O from protoheme: step 1/1. Functionally, converts heme B (protoheme IX) to heme O by substitution of the vinyl group on carbon 2 of heme B porphyrin ring with a hydroxyethyl farnesyl side group. In Rickettsia felis (strain ATCC VR-1525 / URRWXCal2) (Rickettsia azadi), this protein is Protoheme IX farnesyltransferase.